The following is a 598-amino-acid chain: F-box/WD repeat-containing protein 8 (598 aa).

An N-acetylmethionine modification is found at methionine 1. The segment at 17-93 (LAQAQAPKKR…RSPLAREGAG (77 aa)) is disordered. The span at 29–40 (PEAAERRARRPE) shows a compositional bias: basic and acidic residues. Residues 61 to 71 (EGAGRPPAARA) are compositionally biased toward low complexity. Phosphoserine is present on residues serine 83 and serine 85. An F-box domain is found at 113 to 159 (PFFDIQLPYELAINIFQYLDRKELGRCAQVSKTWKVIAEDEVLWYRL). WD repeat units follow at residues 201 to 250 (AVSE…LESE), 259 to 299 (QPNV…FEHD), 300 to 340 (ARIQ…AEFE), 341 to 383 (VPKL…LLYA), 384 to 429 (HGPP…LKLG), 430 to 475 (NVLR…SAHQ), 476 to 513 (LRVS…EVYS), and 514 to 561 (GHPV…AYEF).

As to quaternary structure, component of the Cul7-RING(FBXW8) complex consisting of CUL7, RBX1, SKP1 and FBXW8; within the complex interacts with CUL7 and SKP1. Interacts with GLMN isoform 1. Interacts with OBSL1, CUL1, CUL2, CCT6B, PFDN5, CCT2, CCT3, CCT6A, CCT7, VBP1, CCDC8, ARF1, TRIP13, PDCD5 and GORASP1. Interacts with MAP4K1/HPK1 (when autophosphorylated). Associated component of the 3M complex. Interacts with POUF51 (when phosphorylated on 'Ser-355'). Post-translationally, phosphorylation at Ser-85 by mTORC2 promotes FBXW8 stabilization, allowing its translocation to the cytosol in response to insulin.

The protein localises to the cytoplasm. The protein resides in the perinuclear region. It is found in the golgi apparatus. It participates in protein modification; protein ubiquitination. Its function is as follows. Substrate-recognition component of the Cul7-RING(FBXW8) ubiquitin ligase complex, which mediates the ubiquitination and subsequent proteasomal degradation of target proteins. The Cul7-RING(FBXW8) complex mediates ubiquitination and consequent degradation of GORASP1, acting as a component of the ubiquitin ligase pathway that regulates Golgi morphogenesis and dendrite patterning in brain. Mediates ubiquitination and degradation of IRS1 in a mTOR-dependent manner: the Cul7-RING(FBXW8) complex recognizes and binds IRS1 previously phosphorylated by S6 kinase (RPS6KB1 or RPS6KB2). The Cul7-RING(FBXW8) complex also mediates ubiquitination of MAP4K1/HPK1: recognizes and binds autophosphorylated MAP4K1/HPK1, leading to its degradation, thereby affecting cell proliferation and differentiation. The Cul7-RING(FBXW8) complex also mediates ubiquitination of phosphorylated cyclin-D1 (CCND1). The Cul7-RING(FBXW8) complex is however not a major regulator of CCND1 stability during the G1/S transition. Associated component of the 3M complex, suggesting that it mediates some of 3M complex functions. The sequence is that of F-box/WD repeat-containing protein 8 from Homo sapiens (Human).